The primary structure comprises 479 residues: UDP-N-acetylmuramate--L-alanine ligase (479 aa).

Residue 114-120 (GTHGKTT) coordinates ATP.

This sequence belongs to the MurCDEF family.

The protein localises to the cytoplasm. It catalyses the reaction UDP-N-acetyl-alpha-D-muramate + L-alanine + ATP = UDP-N-acetyl-alpha-D-muramoyl-L-alanine + ADP + phosphate + H(+). It participates in cell wall biogenesis; peptidoglycan biosynthesis. In terms of biological role, cell wall formation. This is UDP-N-acetylmuramate--L-alanine ligase from Pelodictyon phaeoclathratiforme (strain DSM 5477 / BU-1).